We begin with the raw amino-acid sequence, 432 residues long: MSKTYLTEKKFSDFALHPKVIEALEKKGFSNCTQIQALTLPITVKGHDIAGQAQTGTGKTLAFLTSTFHYLLTHPAKEGHEKNQPRALIMAPTRELAVQIYTDAQPLAQSTGVKMGLAYGGDGYDEQLKVLNNGVDIVIGTTGRLIDYVKQGHINLNAIQVVVLDEADRMYDLGFIKDIRWLFRRMPNAAERMNMLFSATLSYRVRELAFEQMNNPEYVEVEPEQKTGFSIKEELFYPSNEEKMRLLQTLIEEEWPERCIIFANTKHRCDDIWAHLAADGHRVGLLTGDVPQKKRLRILEDFTQGNIDILVATDVAARGLHIPSVTHVFNYDLPDDCEDYVHRIGRTGRAGKSGNSISLACEEYALNLPAIETYIQHAIPVSKYNSDALLTDLPEPKRRHRPRQGQPRRNNSAPRRGNNTQRNNRNKRPSHS.

The Q motif signature appears at 9 to 37 (KKFSDFALHPKVIEALEKKGFSNCTQIQA). The 180-residue stretch at 40-219 (LPITVKGHDI…FEQMNNPEYV (180 aa)) folds into the Helicase ATP-binding domain. 53–60 (AQTGTGKT) provides a ligand contact to ATP. The DEAD box motif lies at 165–168 (DEAD). Residues 245–390 (RLLQTLIEEE…VSKYNSDALL (146 aa)) enclose the Helicase C-terminal domain. The interval 393–432 (LPEPKRRHRPRQGQPRRNNSAPRRGNNTQRNNRNKRPSHS) is disordered. A compositionally biased stretch (low complexity) spans 404 to 423 (QGQPRRNNSAPRRGNNTQRN).

Belongs to the DEAD box helicase family. RhlB subfamily. Component of the RNA degradosome, which is a multiprotein complex involved in RNA processing and mRNA degradation.

The protein resides in the cytoplasm. The enzyme catalyses ATP + H2O = ADP + phosphate + H(+). Functionally, DEAD-box RNA helicase involved in RNA degradation. Has RNA-dependent ATPase activity and unwinds double-stranded RNA. The chain is ATP-dependent RNA helicase RhlB from Proteus mirabilis (strain HI4320).